The chain runs to 244 residues: Secreted RxLR effector protein RXLR-C05 (244 aa).

The N-terminal stretch at Met-1–Ala-21 is a signal peptide. Positions Leu-37–Ser-46 are enriched in basic and acidic residues. The tract at residues Leu-37–Gly-56 is disordered. The short motif at Arg-50–Arg-68 is the RxLR-dEER element.

The protein belongs to the RxLR effector family.

The protein resides in the secreted. Its subcellular location is the host cytoplasm. It is found in the host nucleus. Functionally, secreted effector that suppresses pattern-triggered immunity (PTI) in plant host. The protein is Secreted RxLR effector protein RXLR-C05 of Plasmopara halstedii (Downy mildew of sunflower).